The sequence spans 791 residues: Phenylalanine--tRNA ligase beta subunit (791 aa).

In terms of domain architecture, tRNA-binding spans G39–K149. Residues I403–T478 form the B5 domain. Positions 456, 462, 465, and 466 each coordinate Mg(2+). Positions P698–R791 constitute an FDX-ACB domain.

It belongs to the phenylalanyl-tRNA synthetase beta subunit family. Type 1 subfamily. As to quaternary structure, tetramer of two alpha and two beta subunits. The cofactor is Mg(2+).

The protein resides in the cytoplasm. The enzyme catalyses tRNA(Phe) + L-phenylalanine + ATP = L-phenylalanyl-tRNA(Phe) + AMP + diphosphate + H(+). In Clostridium tetani (strain Massachusetts / E88), this protein is Phenylalanine--tRNA ligase beta subunit.